Here is a 283-residue protein sequence, read N- to C-terminus: 4-hydroxy-3-methylbut-2-enyl diphosphate reductase (283 aa).

[4Fe-4S] cluster is bound at residue C12. (2E)-4-hydroxy-3-methylbut-2-enyl diphosphate-binding residues include H40 and H72. Dimethylallyl diphosphate contacts are provided by H40 and H72. H40 and H72 together coordinate isopentenyl diphosphate. C94 contacts [4Fe-4S] cluster. H122 contributes to the (2E)-4-hydroxy-3-methylbut-2-enyl diphosphate binding site. Residue H122 participates in dimethylallyl diphosphate binding. Residue H122 coordinates isopentenyl diphosphate. Catalysis depends on E124, which acts as the Proton donor. T160 is a binding site for (2E)-4-hydroxy-3-methylbut-2-enyl diphosphate. C188 is a [4Fe-4S] cluster binding site. (2E)-4-hydroxy-3-methylbut-2-enyl diphosphate is bound by residues S216, N218, and S259. 3 residues coordinate dimethylallyl diphosphate: S216, N218, and S259. Residues S216, N218, and S259 each contribute to the isopentenyl diphosphate site.

Belongs to the IspH family. The cofactor is [4Fe-4S] cluster.

The enzyme catalyses isopentenyl diphosphate + 2 oxidized [2Fe-2S]-[ferredoxin] + H2O = (2E)-4-hydroxy-3-methylbut-2-enyl diphosphate + 2 reduced [2Fe-2S]-[ferredoxin] + 2 H(+). The catalysed reaction is dimethylallyl diphosphate + 2 oxidized [2Fe-2S]-[ferredoxin] + H2O = (2E)-4-hydroxy-3-methylbut-2-enyl diphosphate + 2 reduced [2Fe-2S]-[ferredoxin] + 2 H(+). Its pathway is isoprenoid biosynthesis; dimethylallyl diphosphate biosynthesis; dimethylallyl diphosphate from (2E)-4-hydroxy-3-methylbutenyl diphosphate: step 1/1. It participates in isoprenoid biosynthesis; isopentenyl diphosphate biosynthesis via DXP pathway; isopentenyl diphosphate from 1-deoxy-D-xylulose 5-phosphate: step 6/6. Functionally, catalyzes the conversion of 1-hydroxy-2-methyl-2-(E)-butenyl 4-diphosphate (HMBPP) into a mixture of isopentenyl diphosphate (IPP) and dimethylallyl diphosphate (DMAPP). Acts in the terminal step of the DOXP/MEP pathway for isoprenoid precursor biosynthesis. The protein is 4-hydroxy-3-methylbut-2-enyl diphosphate reductase of Dictyoglomus turgidum (strain DSM 6724 / Z-1310).